Here is a 163-residue protein sequence, read N- to C-terminus: D-aminoacyl-tRNA deacylase (163 aa).

The Gly-cisPro motif, important for rejection of L-amino acids motif lies at 141–142 (GP).

This sequence belongs to the DTD family. In terms of assembly, homodimer.

It is found in the cytoplasm. It catalyses the reaction glycyl-tRNA(Ala) + H2O = tRNA(Ala) + glycine + H(+). It carries out the reaction a D-aminoacyl-tRNA + H2O = a tRNA + a D-alpha-amino acid + H(+). Functionally, an aminoacyl-tRNA editing enzyme that deacylates mischarged D-aminoacyl-tRNAs. Also deacylates mischarged glycyl-tRNA(Ala), protecting cells against glycine mischarging by AlaRS. Acts via tRNA-based rather than protein-based catalysis; rejects L-amino acids rather than detecting D-amino acids in the active site. By recycling D-aminoacyl-tRNA to D-amino acids and free tRNA molecules, this enzyme counteracts the toxicity associated with the formation of D-aminoacyl-tRNA entities in vivo and helps enforce protein L-homochirality. This chain is D-aminoacyl-tRNA deacylase, found in Neisseria meningitidis serogroup B (strain ATCC BAA-335 / MC58).